The sequence spans 70 residues: MGAIAAGIAMFGAALGAGIGNGLVISKMLEGMARQPELSGQLRTNMFIGVGLIESMPIISFVVALMVMNK.

The next 2 membrane-spanning stretches (helical) occupy residues 4–24 (IAAGIAMFGAALGAGIGNGLV) and 47–67 (FIGVGLIESMPIISFVVALMV).

The protein belongs to the ATPase C chain family. In terms of assembly, F-type ATPases have 2 components, F(1) - the catalytic core - and F(0) - the membrane proton channel. F(1) has five subunits: alpha(3), beta(3), gamma(1), delta(1), epsilon(1). F(0) has three main subunits: a(1), b(2) and c(10-14). The alpha and beta chains form an alternating ring which encloses part of the gamma chain. F(1) is attached to F(0) by a central stalk formed by the gamma and epsilon chains, while a peripheral stalk is formed by the delta and b chains.

The protein resides in the cell membrane. In terms of biological role, f(1)F(0) ATP synthase produces ATP from ADP in the presence of a proton or sodium gradient. F-type ATPases consist of two structural domains, F(1) containing the extramembraneous catalytic core and F(0) containing the membrane proton channel, linked together by a central stalk and a peripheral stalk. During catalysis, ATP synthesis in the catalytic domain of F(1) is coupled via a rotary mechanism of the central stalk subunits to proton translocation. Functionally, key component of the F(0) channel; it plays a direct role in translocation across the membrane. A homomeric c-ring of between 10-14 subunits forms the central stalk rotor element with the F(1) delta and epsilon subunits. This Lactiplantibacillus plantarum (strain ATCC BAA-793 / NCIMB 8826 / WCFS1) (Lactobacillus plantarum) protein is ATP synthase subunit c.